Reading from the N-terminus, the 199-residue chain is Imidazole glycerol phosphate synthase subunit HisH (199 aa).

A Glutamine amidotransferase type-1 domain is found at 3 to 199 (NITIIDTGCA…LKNFVEKVPF (197 aa)). The Nucleophile role is filled by Cys-78. Residues His-178 and Glu-180 contribute to the active site.

Heterodimer of HisH and HisF.

It is found in the cytoplasm. It carries out the reaction 5-[(5-phospho-1-deoxy-D-ribulos-1-ylimino)methylamino]-1-(5-phospho-beta-D-ribosyl)imidazole-4-carboxamide + L-glutamine = D-erythro-1-(imidazol-4-yl)glycerol 3-phosphate + 5-amino-1-(5-phospho-beta-D-ribosyl)imidazole-4-carboxamide + L-glutamate + H(+). It catalyses the reaction L-glutamine + H2O = L-glutamate + NH4(+). It functions in the pathway amino-acid biosynthesis; L-histidine biosynthesis; L-histidine from 5-phospho-alpha-D-ribose 1-diphosphate: step 5/9. Its function is as follows. IGPS catalyzes the conversion of PRFAR and glutamine to IGP, AICAR and glutamate. The HisH subunit catalyzes the hydrolysis of glutamine to glutamate and ammonia as part of the synthesis of IGP and AICAR. The resulting ammonia molecule is channeled to the active site of HisF. This Haemophilus influenzae (strain 86-028NP) protein is Imidazole glycerol phosphate synthase subunit HisH.